We begin with the raw amino-acid sequence, 282 residues long: E3 ubiquitin-protein ligase SIAH1B (282 aa).

The span at 1–17 (MSRQAATALSTGTSKCP) shows a compositional bias: polar residues. Residues 1–23 (MSRQAATALSTGTSKCPPSQRVP) are disordered. Serine 19 carries the phosphoserine; by ATM and ATR modification. Residues 41–76 (CPVCFDYVLPPILQCQSGHLVCSNCRPKLTCCPTCR) form an RING-type zinc finger. The interval 90-282 (VANSVLFPCK…LGINVTISMC (193 aa)) is SBD. Residues 93 to 153 (SVLFPCKYSA…VMPHLMHQHK (61 aa)) form an SIAH-type zinc finger. The Zn(2+) site is built by cysteine 98, cysteine 105, histidine 117, cysteine 121, cysteine 128, cysteine 135, histidine 147, and histidine 152.

This sequence belongs to the SINA (Seven in absentia) family. Homodimer. In terms of processing, phosphorylated on Ser-19 by ATM and ATR. Widely expressed at low level in embryos and adults. Due to the high similarity between SIAH1A and SIAH1B, it is difficult to distinguish its own tissue specificity. Overexpressed in endothelial cells of adult lung.

The protein localises to the cytoplasm. It is found in the nucleus. It catalyses the reaction S-ubiquitinyl-[E2 ubiquitin-conjugating enzyme]-L-cysteine + [acceptor protein]-L-lysine = [E2 ubiquitin-conjugating enzyme]-L-cysteine + N(6)-ubiquitinyl-[acceptor protein]-L-lysine.. It functions in the pathway protein modification; protein ubiquitination. E3 ubiquitin-protein ligase that mediates ubiquitination and subsequent proteasomal degradation of target proteins. E3 ubiquitin ligases accept ubiquitin from an E2 ubiquitin-conjugating enzyme in the form of a thioester and then directly transfers the ubiquitin to targeted substrates. Mediates E3 ubiquitin ligase activity either through direct binding to substrates or by functioning as the essential RING domain subunit of larger E3 complexes. This chain is E3 ubiquitin-protein ligase SIAH1B (Siah1b), found in Mus musculus (Mouse).